The primary structure comprises 334 residues: RNA 3'-terminal phosphate cyclase (334 aa).

279–282 (HMGD) provides a ligand contact to ATP. The active-site Tele-AMP-histidine intermediate is the histidine 303.

This sequence belongs to the RNA 3'-terminal cyclase family. Type 1 subfamily.

The protein resides in the cytoplasm. The enzyme catalyses a 3'-end 3'-phospho-ribonucleotide-RNA + ATP = a 3'-end 2',3'-cyclophospho-ribonucleotide-RNA + AMP + diphosphate. Catalyzes the conversion of 3'-phosphate to a 2',3'-cyclic phosphodiester at the end of RNA. The mechanism of action of the enzyme occurs in 3 steps: (A) adenylation of the enzyme by ATP; (B) transfer of adenylate to an RNA-N3'P to produce RNA-N3'PP5'A; (C) and attack of the adjacent 2'-hydroxyl on the 3'-phosphorus in the diester linkage to produce the cyclic end product. The biological role of this enzyme is unknown but it is likely to function in some aspects of cellular RNA processing. This is RNA 3'-terminal phosphate cyclase from Metallosphaera sedula (strain ATCC 51363 / DSM 5348 / JCM 9185 / NBRC 15509 / TH2).